Reading from the N-terminus, the 450-residue chain is MNEFQPVNRRQFLFTLGATAASAILLKGCGNPPSSSGGGTSSTTQPTAAGASDLEVKTIKLGYIPIFEAAPLIIGREKGFFAKYGLDVEVSKQASWAAARDNVILGSAGGGIDGGQWQMPMPALLTEGAISNGQKVPMYVLACLSTQGNGIAVSNQLKAQNLGLKLAPNRDFILNYPQTSGRKFKASYTFPNANQDFWIRYWFAAGGIDPDKDIELLTVPSAETLQNMRNGTIDCFSTGDPWPSRIAKDDVGYQAALTGQMWPYHPEEFLALRADWVDKHPKATLALLMGLMEAQQWCDQKANRAEMAKILSGRNFFNVPVSILQPILEGQIKVGADGKDLNNFDAGPLFWKSPRGSVSYPYKGLTLWFLVESIRWGFNKQVLPDIAAAQKLNDRVTREDLWQEAAKKLGVPAADIPTGSTRGTETFFDGITYNPDSPQAYLQSLKIKRA.

Residues 1–36 (MNEFQPVNRRQFLFTLGATAASAILLKGCGNPPSSS) constitute a signal peptide (tat-type signal).

Belongs to the CmpA/NrtA family. As to quaternary structure, the complex is composed of two ATP-binding proteins (CmpC and CmpD), a transmembrane protein (CmpB) and a solute-binding protein (CmpA). In terms of processing, predicted to be exported by the Tat system. The position of the signal peptide cleavage has not been experimentally proven.

The protein resides in the cell inner membrane. In terms of biological role, part of the ABC transporter complex CmpABCD involved in bicarbonate transport. Binds bicarbonate with high affinity. The protein is Bicarbonate-binding protein CmpA (cmpA) of Synechococcus sp. (strain ATCC 27144 / PCC 6301 / SAUG 1402/1) (Anacystis nidulans).